Here is a 119-residue protein sequence, read N- to C-terminus: Large ribosomal subunit protein bL19 (119 aa).

This sequence belongs to the bacterial ribosomal protein bL19 family.

Functionally, this protein is located at the 30S-50S ribosomal subunit interface and may play a role in the structure and function of the aminoacyl-tRNA binding site. This chain is Large ribosomal subunit protein bL19, found in Pediococcus pentosaceus (strain ATCC 25745 / CCUG 21536 / LMG 10740 / 183-1w).